We begin with the raw amino-acid sequence, 111 residues long: UPF0342 protein SAG1376 (111 aa).

Positions Q52–Q63 are enriched in polar residues. The segment at Q52–K71 is disordered.

It belongs to the UPF0342 family.

This chain is UPF0342 protein SAG1376, found in Streptococcus agalactiae serotype V (strain ATCC BAA-611 / 2603 V/R).